Here is a 1319-residue protein sequence, read N- to C-terminus: Girdin homolog (1319 aa).

The Calponin-homology (CH) domain occupies 6-118; the sequence is ENWSHPLAFW…KLLLLLLGCA (113 aa). Coiled coils occupy residues 141–173, 218–690, and 732–1096; these read ELAACIQKLTESDEIVQNLEDFERRKMKETDEV, TSEL…ADLI, and KRER…KKST. Residues 166-222 are disordered; the sequence is KMKETDEVGGGGGSIEDVDSDDMESSTTSSSNGEIAIKQQDQSFLMSRSTSPTSELR. Positions 204-222 are enriched in polar residues; the sequence is QQDQSFLMSRSTSPTSELR. 2 disordered regions span residues 1112-1236 and 1289-1308; these read INRR…SPAH and NVNLPQNPPDLPENSDLKPN. Residues 1118-1131 show a composition bias toward polar residues; it reads TSNGGSTTEDSSVY.

This sequence belongs to the CCDC88 family. Expressed in AQR and PQR gas-sensing neurons in hermaphrodites (at protein level).

Its subcellular location is the cytoplasm. The protein localises to the cytoskeleton. It localises to the cilium basal body. The protein resides in the microtubule organizing center. It is found in the centrosome. Its subcellular location is the centriole. Scaffolding protein that plays a role in ciliogenesis, cilium positioning and dendrite anchoring in sensory amphid neurons including AWB, AWA, AWC, ADL and ASI, the phasmid neurons PHA and PHB and the gas sensing neurons AQR, PQR, URX and BAG. Its role in cilium positioning may be through regulation of the localization of cell adhesion proteins such as the apical junction protein ajm-1, and the ciliary scaffolding protein Rootletin/che-10. Plays a more prominent role in regulating dendrite morphogenesis in AQR than in PQR neurons. Regulates localization of hmr-1 to the distal AQR dendrite. During embryonic elongation, required for the anchoring of URX and BAG dendrites to the presumptive nose. The polypeptide is Girdin homolog (Caenorhabditis elegans).